Consider the following 186-residue polypeptide: Elongation factor P (186 aa).

It belongs to the elongation factor P family.

The protein localises to the cytoplasm. Its pathway is protein biosynthesis; polypeptide chain elongation. In terms of biological role, involved in peptide bond synthesis. Stimulates efficient translation and peptide-bond synthesis on native or reconstituted 70S ribosomes in vitro. Probably functions indirectly by altering the affinity of the ribosome for aminoacyl-tRNA, thus increasing their reactivity as acceptors for peptidyl transferase. In Shewanella sp. (strain ANA-3), this protein is Elongation factor P.